Here is a 1199-residue protein sequence, read N- to C-terminus: DNA-directed RNA polymerase subunit beta (1199 aa).

Residues 1177-1199 (EQEEKKAKEAEQETAEKEETKTE) are disordered.

Belongs to the RNA polymerase beta chain family. In terms of assembly, the RNAP catalytic core consists of 2 alpha, 1 beta, 1 beta' and 1 omega subunit. When a sigma factor is associated with the core the holoenzyme is formed, which can initiate transcription.

The catalysed reaction is RNA(n) + a ribonucleoside 5'-triphosphate = RNA(n+1) + diphosphate. Its function is as follows. DNA-dependent RNA polymerase catalyzes the transcription of DNA into RNA using the four ribonucleoside triphosphates as substrates. This Ligilactobacillus salivarius (strain UCC118) (Lactobacillus salivarius) protein is DNA-directed RNA polymerase subunit beta.